The following is a 192-amino-acid chain: Ubiquitin-conjugating enzyme E2 1 (192 aa).

The tract at residues 1–28 (MTTPSRRRLMRDFKKLQEDPPAGVSGAP) is disordered. In terms of domain architecture, UBC core spans 4 to 150 (PSRRRLMRDF…VQQIVEQSWL (147 aa)). Residue C88 is the Glycyl thioester intermediate of the active site. The tract at residues 171–192 (AAPGANDADDDRMDEGASGSNA) is disordered.

Belongs to the ubiquitin-conjugating enzyme family. As to quaternary structure, interacts with ubr-1 and rfp-1. Interacts with ubc-13.

The catalysed reaction is S-ubiquitinyl-[E1 ubiquitin-activating enzyme]-L-cysteine + [E2 ubiquitin-conjugating enzyme]-L-cysteine = [E1 ubiquitin-activating enzyme]-L-cysteine + S-ubiquitinyl-[E2 ubiquitin-conjugating enzyme]-L-cysteine.. It functions in the pathway protein modification; protein ubiquitination. In terms of biological role, catalyzes the covalent attachment of ubiquitin to other proteins. The protein is Ubiquitin-conjugating enzyme E2 1 (ubc-1) of Caenorhabditis elegans.